Consider the following 378-residue polypeptide: uncharacterized protein (378 aa).

Positions 38, 60, 90, 93, 96, and 104 each coordinate Zn(2+).

This sequence belongs to the zinc-containing alcohol dehydrogenase family. Class-III subfamily. The cofactor is Zn(2+).

This is an uncharacterized protein from Bacillus subtilis (strain 168).